A 97-amino-acid chain; its full sequence is Small, acid-soluble spore protein gamma-type (97 aa).

Residues 1 to 42 are compositionally biased toward polar residues; sequence MAKQTNKTASGTSTQHVKQQNAQASKNNFGTEFGSETNVQEV. A disordered region spans residues 1 to 97; the sequence is MAKQTNKTAS…KNQNSGKYQG (97 aa). 2 consecutive repeats follow at residues 23 to 56 and 58 to 91; these read QASKNNFGTEFGSETNVQEVKQQNAQAAANKSQN and QASKNNFGTEFASETSAQEVRQQNAQAQAKKNQN. Residues 43 to 63 show a composition bias toward low complexity; that stretch reads KQQNAQAAANKSQNAQASKNN. Positions 69–78 are enriched in polar residues; sequence ASETSAQEVR. The segment covering 79–91 has biased composition (low complexity); sequence QQNAQAQAKKNQN.

It belongs to the gamma-type SASP family.

Its function is as follows. SASP are proteins degraded in the first minutes of spore germination and provide amino acids for both new protein synthesis and metabolism. These proteins may be involved in dormant spore's high resistance to UV light. In Priestia megaterium (Bacillus megaterium), this protein is Small, acid-soluble spore protein gamma-type (sasP-B).